Reading from the N-terminus, the 181-residue chain is Adenine phosphoribosyltransferase (181 aa).

Belongs to the purine/pyrimidine phosphoribosyltransferase family. Homodimer.

The protein localises to the cytoplasm. It carries out the reaction AMP + diphosphate = 5-phospho-alpha-D-ribose 1-diphosphate + adenine. The protein operates within purine metabolism; AMP biosynthesis via salvage pathway; AMP from adenine: step 1/1. Catalyzes a salvage reaction resulting in the formation of AMP, that is energically less costly than de novo synthesis. The chain is Adenine phosphoribosyltransferase from Pseudoalteromonas translucida (strain TAC 125).